Consider the following 509-residue polypeptide: MMKGSPSVPPAGCLLPLLLLLFTGVSGEVSWFSVKGPAEPITVLLGTEATLPCQLSPEQSAARMHIRWYRAQPTPAVLVFHNGQEQGEVQMPEYRGRTQMVRQAIDMGSVALQIQQVQASDDGLYHCQFTDGFTSQEVSMELRVIGLGSAPLVHMTGPENDGIRVLCSSSGWFPKPKVQWRDTSGNMLLSSSELQTQDREGLFQVEVSLLVTDRAIGNVICSIQNPMYDQEKSKAILLPEPFFPKTCPWKVALVCSVLILLVLLGGISLGIWKEHQVKRREIKKWSKEHEEMLLLKKGTKSVLKIRDDLQADLDRRKALYKEDWKKALLYPDWRKELFQEAPVRINYEMPDQDKTDSRTEENRGEETVSSSQVDHNLITLSQEGFMLGRYYWEVDVKDTEEWTLGVYELCTQDASLTDPLRKFRVLEKNGDGYRALDFCSQNINSEEPLQLKTRPLKIAIFLDQEDNDLSFYNMTDETHIFSFAQVPFLGSPYPYFTRNSMGLSATAQP.

Positions 1 to 27 (MMKGSPSVPPAGCLLPLLLLLFTGVSG) are cleaved as a signal peptide. 2 Ig-like V-type domains span residues 28 to 139 (EVSW…QEVS) and 151 to 237 (PLVH…KAIL). The Extracellular portion of the chain corresponds to 28-250 (EVSWFSVKGP…PFFPKTCPWK (223 aa)). 2 cysteine pairs are disulfide-bonded: C53–C127 and C167–C221. A helical membrane pass occupies residues 251 to 271 (VALVCSVLILLVLLGGISLGI). Residues 272–509 (WKEHQVKRRE…SMGLSATAQP (238 aa)) are Cytoplasmic-facing. Positions 316–509 (RKALYKEDWK…SMGLSATAQP (194 aa)) constitute a B30.2/SPRY domain. Residues 349–372 (MPDQDKTDSRTEENRGEETVSSSQ) are disordered. The segment covering 351–366 (DQDKTDSRTEENRGEE) has biased composition (basic and acidic residues).

The protein belongs to the immunoglobulin superfamily. BTN/MOG family.

The protein localises to the membrane. The chain is Butyrophilin-like protein 1 (Btnl1) from Mus musculus (Mouse).